The chain runs to 236 residues: Exosome complex component Rrp4 (236 aa).

The S1 motif domain occupies 64-133 (GDKVIGKVIE…EIKESWLTLK (70 aa)). Residues 141-199 (EGGHMVLIHASRVPRVIGKGGGMVNMVKELTATRIIIGQNGLIWIDGPIEGVTMAIAAI) form the KH domain.

This sequence belongs to the RRP4 family. Component of the archaeal exosome complex. Forms a trimer of Rrp4 and/or Csl4 subunits. The trimer associates with a hexameric ring-like arrangement composed of 3 Rrp41-Rrp42 heterodimers.

The protein localises to the cytoplasm. Non-catalytic component of the exosome, which is a complex involved in RNA degradation. Increases the RNA binding and the efficiency of RNA degradation. Confers strong poly(A) specificity to the exosome. The chain is Exosome complex component Rrp4 from Thermoplasma acidophilum (strain ATCC 25905 / DSM 1728 / JCM 9062 / NBRC 15155 / AMRC-C165).